The chain runs to 210 residues: MELQLAIDLLNKEDAAELANKVKDYVDIVEIGTPIIYNEGLPAVKHMADNISNVKVLADMKIMDAADYEVSQAIKFGADVITILGVAEDASIKAAIEEAHKNNKQLLVDMIAVQDLEKRAKELDEMGADYIAVHTGYDLQAEGQSPLESLRTVKSVIKNSKVAVAGGIKPDTIKDIVAESPDLVIVGGGIANADDPVEAAKQCRAAIEGK.

Belongs to the HPS/KGPDC family. HPS subfamily.

It catalyses the reaction D-ribulose 5-phosphate + formaldehyde = D-arabino-hex-3-ulose 6-phosphate. Its pathway is one-carbon metabolism; formaldehyde assimilation via RuMP pathway; D-fructose 6-phosphate from D-ribulose 5-phosphate and formaldehyde: step 1/2. Functionally, catalyzes the condensation of ribulose 5-phosphate with formaldehyde to form 3-hexulose 6-phosphate. The sequence is that of 3-hexulose-6-phosphate synthase from Staphylococcus aureus (strain NCTC 8325 / PS 47).